A 427-amino-acid polypeptide reads, in one-letter code: Histidinol dehydrogenase (427 aa).

Residues Ser232, Gln254, and His257 each contribute to the substrate site. Zn(2+) is bound by residues Gln254 and His257. Residues Glu322 and His323 each act as proton acceptor in the active site. Substrate contacts are provided by His323, Asp356, Glu410, and His415. Asp356 serves as a coordination point for Zn(2+). Position 415 (His415) interacts with Zn(2+).

Belongs to the histidinol dehydrogenase family. Zn(2+) is required as a cofactor.

The catalysed reaction is L-histidinol + 2 NAD(+) + H2O = L-histidine + 2 NADH + 3 H(+). It participates in amino-acid biosynthesis; L-histidine biosynthesis; L-histidine from 5-phospho-alpha-D-ribose 1-diphosphate: step 9/9. Catalyzes the sequential NAD-dependent oxidations of L-histidinol to L-histidinaldehyde and then to L-histidine. This Listeria innocua serovar 6a (strain ATCC BAA-680 / CLIP 11262) protein is Histidinol dehydrogenase.